We begin with the raw amino-acid sequence, 257 residues long: Thiazole synthase (257 aa).

Lys-99 serves as the catalytic Schiff-base intermediate with DXP. 1-deoxy-D-xylulose 5-phosphate contacts are provided by residues Gly-160, 186 to 187, and 208 to 209; these read AG and NT.

The protein belongs to the ThiG family. As to quaternary structure, homotetramer. Forms heterodimers with either ThiH or ThiS.

It localises to the cytoplasm. The enzyme catalyses [ThiS sulfur-carrier protein]-C-terminal-Gly-aminoethanethioate + 2-iminoacetate + 1-deoxy-D-xylulose 5-phosphate = [ThiS sulfur-carrier protein]-C-terminal Gly-Gly + 2-[(2R,5Z)-2-carboxy-4-methylthiazol-5(2H)-ylidene]ethyl phosphate + 2 H2O + H(+). It functions in the pathway cofactor biosynthesis; thiamine diphosphate biosynthesis. In terms of biological role, catalyzes the rearrangement of 1-deoxy-D-xylulose 5-phosphate (DXP) to produce the thiazole phosphate moiety of thiamine. Sulfur is provided by the thiocarboxylate moiety of the carrier protein ThiS. In vitro, sulfur can be provided by H(2)S. The polypeptide is Thiazole synthase (Thermodesulfovibrio yellowstonii (strain ATCC 51303 / DSM 11347 / YP87)).